Consider the following 157-residue polypeptide: MKLSHLDEKNHPKMVDVGDKNITSRIATASGMIYMSQEAFDVIKNNTAKKGPVLQTAIIAAIMGAKKTSEIIPMCHPLMLSKVETDIMEFVKECAFKLIVTVKCEGKTGVEMEALSGVSIGLLTIYDMIKAIDKSMRITDIVLESKEGGKSGKFVRS.

Substrate is bound by residues 74-76 (MCH) and 112-113 (ME). Asp-127 is a catalytic residue.

The protein belongs to the MoaC family. As to quaternary structure, homohexamer; trimer of dimers.

It carries out the reaction (8S)-3',8-cyclo-7,8-dihydroguanosine 5'-triphosphate = cyclic pyranopterin phosphate + diphosphate. It functions in the pathway cofactor biosynthesis; molybdopterin biosynthesis. Functionally, catalyzes the conversion of (8S)-3',8-cyclo-7,8-dihydroguanosine 5'-triphosphate to cyclic pyranopterin monophosphate (cPMP). The polypeptide is Cyclic pyranopterin monophosphate synthase (Campylobacter jejuni subsp. jejuni serotype O:23/36 (strain 81-176)).